Consider the following 621-residue polypeptide: UvrABC system protein C (621 aa).

The 80-residue stretch at 21–100 (AEPGVYLMRD…IKTYQPPYNV (80 aa)) folds into the GIY-YIG domain. The UVR domain occupies 210–245 (DELIRELKEKMAQAAQQENYEAAARYRDQIRGLEQL).

It belongs to the UvrC family. In terms of assembly, interacts with UvrB in an incision complex.

It localises to the cytoplasm. Functionally, the UvrABC repair system catalyzes the recognition and processing of DNA lesions. UvrC both incises the 5' and 3' sides of the lesion. The N-terminal half is responsible for the 3' incision and the C-terminal half is responsible for the 5' incision. In Synechococcus sp. (strain JA-3-3Ab) (Cyanobacteria bacterium Yellowstone A-Prime), this protein is UvrABC system protein C.